The primary structure comprises 94 residues: Myosuppressin (94 aa).

Positions 1–24 (MMSPTLMILISITTMAILSGESFG) are cleaved as a signal peptide. The propeptide occupies 25-80 (AMPAQCNSEFLEELPPRLRKICVAIARIWDAREMNDFVDDREYRENLPRYDSSVKR). Glutamine 81 carries the pyrrolidone carboxylic acid modification. At phenylalanine 90 the chain carries Phenylalanine amide.

In terms of tissue distribution, expressed throughout the nervous system (at protein level).

It is found in the secreted. In terms of biological role, myoinhibiting neuropeptide. The polypeptide is Myosuppressin (Camponotus floridanus (Florida carpenter ant)).